The sequence spans 97 residues: UPF0235 protein HAPS_1504 (97 aa).

This sequence belongs to the UPF0235 family.

The protein is UPF0235 protein HAPS_1504 of Glaesserella parasuis serovar 5 (strain SH0165) (Haemophilus parasuis).